Consider the following 359-residue polypeptide: DNA replication and repair protein RecF (359 aa).

An ATP-binding site is contributed by 30-37 (GANGSGKT).

It belongs to the RecF family.

The protein resides in the cytoplasm. The RecF protein is involved in DNA metabolism; it is required for DNA replication and normal SOS inducibility. RecF binds preferentially to single-stranded, linear DNA. It also seems to bind ATP. This is DNA replication and repair protein RecF from Vibrio atlanticus (strain LGP32) (Vibrio splendidus (strain Mel32)).